A 273-amino-acid polypeptide reads, in one-letter code: Nitrogenase iron protein (273 aa).

Residue 8-15 (GKGGIGKS) coordinates ATP. C95 lines the [4Fe-4S] cluster pocket. The residue at position 98 (R98) is an ADP-ribosylarginine; by dinitrogenase reductase ADP-ribosyltransferase. C130 serves as a coordination point for [4Fe-4S] cluster.

This sequence belongs to the NifH/BchL/ChlL family. Homodimer. [4Fe-4S] cluster is required as a cofactor. In terms of processing, the reversible ADP-ribosylation of Arg-98 inactivates the nitrogenase reductase and regulates nitrogenase activity.

The enzyme catalyses N2 + 8 reduced [2Fe-2S]-[ferredoxin] + 16 ATP + 16 H2O = H2 + 8 oxidized [2Fe-2S]-[ferredoxin] + 2 NH4(+) + 16 ADP + 16 phosphate + 6 H(+). In terms of biological role, the key enzymatic reactions in nitrogen fixation are catalyzed by the nitrogenase complex, which has 2 components: the iron protein and the molybdenum-iron protein. The chain is Nitrogenase iron protein from Roseiflexus sp. (strain RS-1).